The sequence spans 567 residues: uncharacterized protein (567 aa).

Topologically, residues Met-1 to Ser-31 are lumenal. The chain crosses the membrane as a helical span at residues Ser-32–Val-52. The Cytoplasmic segment spans residues Gln-53–Val-64. A helical membrane pass occupies residues Ile-65–Ile-85. Residues Gln-86–Asn-87 lie on the Lumenal side of the membrane. A helical membrane pass occupies residues Met-88–Ser-108. The Cytoplasmic segment spans residues Gly-109 to Ala-128. A helical transmembrane segment spans residues Phe-129–Leu-149. The Lumenal portion of the chain corresponds to Asn-150 to Val-159. A helical membrane pass occupies residues Glu-160 to Phe-180. Topologically, residues Asn-181–Lys-188 are cytoplasmic. Residues Leu-189–Glu-209 traverse the membrane as a helical segment. Over Thr-210–Gly-227 the chain is Lumenal. Residues Ile-228–Ile-248 traverse the membrane as a helical segment. The Cytoplasmic portion of the chain corresponds to Thr-249–Tyr-277. The helical transmembrane segment at Phe-278 to Leu-298 threads the bilayer. Residues Lys-299–Lys-315 lie on the Lumenal side of the membrane. Residues Tyr-316 to Phe-338 form a helical membrane-spanning segment. Over Thr-339–Pro-347 the chain is Cytoplasmic. The helical transmembrane segment at Ile-348 to Phe-366 threads the bilayer. At Pro-367–Gln-392 the chain is on the lumenal side. A helical transmembrane segment spans residues Met-393–Glu-413. The Cytoplasmic portion of the chain corresponds to Gly-414 to Thr-424. Residues Leu-425 to Ile-445 form a helical membrane-spanning segment. Residues Leu-446–Lys-567 are Lumenal-facing. Ser-515 carries the phosphoserine modification.

Belongs to the monovalent cation:proton antiporter 1 (CPA1) transporter (TC 2.A.36) family.

The protein resides in the golgi apparatus membrane. This is an uncharacterized protein from Schizosaccharomyces pombe (strain 972 / ATCC 24843) (Fission yeast).